The following is a 244-amino-acid chain: MINGLIGKKIGMTQLFDSKGDVRPVTVLQAGPCVITQRKTANKDGYDAAQVGLVEFVKETRLTKAQLGHLGKNDLPPVRTLHEFAIVADGPSEAESNGEVKVGDKVLVDLFEGSKFVDVTGVSKGRGFAGVVKRHKFAGGARSHGSMFQISGSIGSSAFPSRVFKGMRMAGHMGQDQVTVRNLRILGIDKDENLLVVEGAVPGPKDATVFITMSKKPPRERRGFAGSSTVDPLKASKRAVAKKK.

A disordered region spans residues 215 to 244 (KKPPRERRGFAGSSTVDPLKASKRAVAKKK). A compositionally biased stretch (basic residues) spans 235 to 244 (ASKRAVAKKK).

This sequence belongs to the universal ribosomal protein uL3 family. As to quaternary structure, part of the 50S ribosomal subunit. Forms a cluster with proteins L14 and L19.

In terms of biological role, one of the primary rRNA binding proteins, it binds directly near the 3'-end of the 23S rRNA, where it nucleates assembly of the 50S subunit. In Koribacter versatilis (strain Ellin345), this protein is Large ribosomal subunit protein uL3.